Here is a 520-residue protein sequence, read N- to C-terminus: MKEQEIIAELSHSYFNHILREVRPFLEYFNDDFLDSSLTAPIDSELLERLFFMAAITSLDVSLPFNFSDSDVVKSHRKHRWLTSVQSFGSKSKQGIVGKSRLFNAFTVVVKRAKNSKFDEITMRDFCVGINLNKILRQAPFFVRTLGGFQHKNQFNIVTEFVDGRTLKTFLQSKRSSWMDFLNIFFQILLGLEIAQNRLNFSHYDLHTDNIILVPVERSFTVSLYGSNYTVKHDYRPVMIDFGLSSVHTKGKTLGQTNLENKGIFGHMSPGYDIYVFLLFCIDVVQSTNLSIYKGITDLLGFFNSKTNISMDLLTNNHIQSLEKGVSNLVPYQFISYIRDKFSPYLNVDIGPQKMSIDRCLGQKPMFLRLKHLLDRDDELEPLNSPLLKKGFVKTLVNNIKVYYWYREKMVLESDQTAQLIETDKEILDNLIDDLELKIVRKGSDKPQITVEQKNLFFMALEYYNFIRELRLEESSEFYKTWSKRFKKTWVCRNIFSQLDCVIREERLTKCPTAGATLEK.

The Protein kinase domain maps to 82–393 (LTSVQSFGSK…NSPLLKKGFV (312 aa)). ATP is bound by residues 88–96 (FGSKSKQGI) and Lys-111. The active-site Proton acceptor is the Asp-205. A coiled-coil region spans residues 416–442 (QTAQLIETDKEILDNLIDDLELKIVRK).

The protein belongs to the protein kinase superfamily.

Probable kinase. The polypeptide is Probable kinase 098L (Aedes vexans (Inland floodwater mosquito)).